Here is a 360-residue protein sequence, read N- to C-terminus: Probable dual-specificity RNA methyltransferase RlmN (360 aa).

Glu91 (proton acceptor) is an active-site residue. Residues 97–335 (QHYGQSVCVT…CVVRQEHGTD (239 aa)) form the Radical SAM core domain. Cysteines 104 and 340 form a disulfide. 3 residues coordinate [4Fe-4S] cluster: Cys111, Cys115, and Cys118. S-adenosyl-L-methionine-binding positions include 163 to 164 (GE), Ser195, 218 to 220 (SLH), and Asn296. Catalysis depends on Cys340, which acts as the S-methylcysteine intermediate.

This sequence belongs to the radical SAM superfamily. RlmN family. The cofactor is [4Fe-4S] cluster.

Its subcellular location is the cytoplasm. The catalysed reaction is adenosine(2503) in 23S rRNA + 2 reduced [2Fe-2S]-[ferredoxin] + 2 S-adenosyl-L-methionine = 2-methyladenosine(2503) in 23S rRNA + 5'-deoxyadenosine + L-methionine + 2 oxidized [2Fe-2S]-[ferredoxin] + S-adenosyl-L-homocysteine. The enzyme catalyses adenosine(37) in tRNA + 2 reduced [2Fe-2S]-[ferredoxin] + 2 S-adenosyl-L-methionine = 2-methyladenosine(37) in tRNA + 5'-deoxyadenosine + L-methionine + 2 oxidized [2Fe-2S]-[ferredoxin] + S-adenosyl-L-homocysteine. Specifically methylates position 2 of adenine 2503 in 23S rRNA and position 2 of adenine 37 in tRNAs. In Streptococcus equi subsp. zooepidemicus (strain H70), this protein is Probable dual-specificity RNA methyltransferase RlmN.